We begin with the raw amino-acid sequence, 472 residues long: 3-isopropylmalate dehydratase large subunit (472 aa).

[4Fe-4S] cluster-binding residues include Cys-353, Cys-414, and Cys-417.

It belongs to the aconitase/IPM isomerase family. LeuC type 1 subfamily. Heterodimer of LeuC and LeuD. [4Fe-4S] cluster is required as a cofactor.

It carries out the reaction (2R,3S)-3-isopropylmalate = (2S)-2-isopropylmalate. The protein operates within amino-acid biosynthesis; L-leucine biosynthesis; L-leucine from 3-methyl-2-oxobutanoate: step 2/4. Its function is as follows. Catalyzes the isomerization between 2-isopropylmalate and 3-isopropylmalate, via the formation of 2-isopropylmaleate. This is 3-isopropylmalate dehydratase large subunit from Psychrobacter cryohalolentis (strain ATCC BAA-1226 / DSM 17306 / VKM B-2378 / K5).